Reading from the N-terminus, the 215-residue chain is Large ribosomal subunit protein uL4 (215 aa).

Residues 43–100 are disordered; sequence AAKRQGTHSTKTRGEVSGGGKKPYRQKGSGRARQGSTRAPQFTGGGTVHGPKPRDYSQ.

Belongs to the universal ribosomal protein uL4 family. Part of the 50S ribosomal subunit.

Its function is as follows. One of the primary rRNA binding proteins, this protein initially binds near the 5'-end of the 23S rRNA. It is important during the early stages of 50S assembly. It makes multiple contacts with different domains of the 23S rRNA in the assembled 50S subunit and ribosome. In terms of biological role, forms part of the polypeptide exit tunnel. The sequence is that of Large ribosomal subunit protein uL4 from Mycolicibacterium smegmatis (Mycobacterium smegmatis).